Here is a 2292-residue protein sequence, read N- to C-terminus: Protein Ycf2 (2292 aa).

1644 to 1651 serves as a coordination point for ATP; that stretch reads GSIGTGRS.

Belongs to the Ycf2 family.

The protein resides in the plastid. Its subcellular location is the chloroplast stroma. Probable ATPase of unknown function. Its presence in a non-photosynthetic plant (Epifagus virginiana) and experiments in tobacco indicate that it has an essential function which is probably not related to photosynthesis. The chain is Protein Ycf2 from Morus indica (Mulberry).